Here is a 579-residue protein sequence, read N- to C-terminus: Probable cholinesterase (579 aa).

The first 19 residues, 1-19 (MTDHKIIMLLLLGIYCIQA), serve as a signal peptide directing secretion. Residues asparagine 77 and asparagine 144 are each glycosylated (N-linked (GlcNAc...) asparagine; by host). Serine 217 serves as the catalytic Acyl-ester intermediate. Asparagine 257, asparagine 269, and asparagine 283 each carry an N-linked (GlcNAc...) asparagine; by host glycan. Glutamate 337 functions as the Charge relay system in the catalytic mechanism. N-linked (GlcNAc...) asparagine; by host glycosylation is found at asparagine 373 and asparagine 394. Histidine 451 (charge relay system) is an active-site residue. The N-linked (GlcNAc...) asparagine; by host glycan is linked to asparagine 469.

Belongs to the type-B carboxylesterase/lipase family.

It carries out the reaction an acylcholine + H2O = a carboxylate + choline + H(+). In terms of biological role, may be involved in the disruption of the host membrane. This chain is Probable cholinesterase, found in Acanthamoeba polyphaga mimivirus (APMV).